The sequence spans 563 residues: Dihydroxy-acid dehydratase (563 aa).

Asp-78 contributes to the Mg(2+) binding site. Cys-119 lines the [2Fe-2S] cluster pocket. Residues Asp-120 and Lys-121 each coordinate Mg(2+). Lys-121 is modified (N6-carboxylysine). Cys-191 lines the [2Fe-2S] cluster pocket. Position 442 (Glu-442) interacts with Mg(2+). The active-site Proton acceptor is the Ser-468.

It belongs to the IlvD/Edd family. Homodimer. Requires [2Fe-2S] cluster as cofactor. It depends on Mg(2+) as a cofactor.

The enzyme catalyses (2R)-2,3-dihydroxy-3-methylbutanoate = 3-methyl-2-oxobutanoate + H2O. The catalysed reaction is (2R,3R)-2,3-dihydroxy-3-methylpentanoate = (S)-3-methyl-2-oxopentanoate + H2O. It functions in the pathway amino-acid biosynthesis; L-isoleucine biosynthesis; L-isoleucine from 2-oxobutanoate: step 3/4. The protein operates within amino-acid biosynthesis; L-valine biosynthesis; L-valine from pyruvate: step 3/4. Functionally, functions in the biosynthesis of branched-chain amino acids. Catalyzes the dehydration of (2R,3R)-2,3-dihydroxy-3-methylpentanoate (2,3-dihydroxy-3-methylvalerate) into 2-oxo-3-methylpentanoate (2-oxo-3-methylvalerate) and of (2R)-2,3-dihydroxy-3-methylbutanoate (2,3-dihydroxyisovalerate) into 2-oxo-3-methylbutanoate (2-oxoisovalerate), the penultimate precursor to L-isoleucine and L-valine, respectively. The polypeptide is Dihydroxy-acid dehydratase (Desulfitobacterium hafniense (strain DSM 10664 / DCB-2)).